A 394-amino-acid chain; its full sequence is Elongation factor Tu (394 aa).

The region spanning K10 to E205 is the tr-type G domain. The tract at residues G19 to T26 is G1. G19–T26 is a binding site for GTP. Position 26 (T26) interacts with Mg(2+). The tract at residues G61–N65 is G2. The interval D82–G85 is G3. GTP contacts are provided by residues D82–H86 and N137–D140. The interval N137–D140 is G4. The tract at residues S173–F175 is G5.

It belongs to the TRAFAC class translation factor GTPase superfamily. Classic translation factor GTPase family. EF-Tu/EF-1A subfamily. Monomer.

Its subcellular location is the cytoplasm. It carries out the reaction GTP + H2O = GDP + phosphate + H(+). In terms of biological role, GTP hydrolase that promotes the GTP-dependent binding of aminoacyl-tRNA to the A-site of ribosomes during protein biosynthesis. This chain is Elongation factor Tu, found in Borreliella afzelii (strain PKo) (Borrelia afzelii).